The sequence spans 596 residues: MKHIRNFSIIAHIDHGKSTLSDRLIQVCGGLSDREMDAQVLDSMDLERERGITIKAQSVTLEYKAKNGETYQLNFIDTPGHVDFSYEVSRSLAACEGALLVVDAGQGVEAQTLANCYTALDMNLDVVPILNKIDLPQADPERVAAEIEDIVGIDAMNAVRCSAKTGVGIDEVLEVIVDQIPPPEGDPEAPLQALIIDSWFDSYLGVVSLVRIKNGVLKKGDKFKVMSTGQNHTADRVGIFTPKQTDKTELKTGEVGFVIAGIKEIHGAPVGDTLTLAKHGAEKPLPGFKKVKPQVYAGVFPISTDEYENFRDALNKLSLNDASLFFEPESSSALGFGFRIGYLGLLHMEIIQERLEREYDLDLITTAPTVVYEVLLTSGETIYVDNPADLPAINNIEEMREPIVEANILVPKEYLGNVITLCIEKRGTQVNMVYHGNQVAVTYHLPMAEVVMDFFDRLKSTSRGYASLEYNFIRFDPADMVRLDILINGDRVDALAMIIHRSNIRHRGLALVEKMKELIPRQMFDIAIQAAVGSQIIARSTVKALRKDVTAKCYGGDVSRKKKLLNKQKEGKKRMKQVGNVEVPQEAFLAVLKLNE.

Residues 2-184 (KHIRNFSIIA…VIVDQIPPPE (183 aa)) form the tr-type G domain. Residues 14 to 19 (DHGKST) and 131 to 134 (NKID) contribute to the GTP site.

Belongs to the TRAFAC class translation factor GTPase superfamily. Classic translation factor GTPase family. LepA subfamily.

It localises to the cell inner membrane. The enzyme catalyses GTP + H2O = GDP + phosphate + H(+). Its function is as follows. Required for accurate and efficient protein synthesis under certain stress conditions. May act as a fidelity factor of the translation reaction, by catalyzing a one-codon backward translocation of tRNAs on improperly translocated ribosomes. Back-translocation proceeds from a post-translocation (POST) complex to a pre-translocation (PRE) complex, thus giving elongation factor G a second chance to translocate the tRNAs correctly. Binds to ribosomes in a GTP-dependent manner. In Shewanella sp. (strain ANA-3), this protein is Elongation factor 4.